Reading from the N-terminus, the 349-residue chain is ATP phosphoribosyltransferase regulatory subunit (349 aa).

Residues 327 to 349 (GRGRGVRPRRASARGGRARARPR) form a disordered region. Residues 330-349 (RGVRPRRASARGGRARARPR) are compositionally biased toward basic residues.

It belongs to the class-II aminoacyl-tRNA synthetase family. HisZ subfamily. In terms of assembly, heteromultimer composed of HisG and HisZ subunits.

It localises to the cytoplasm. The protein operates within amino-acid biosynthesis; L-histidine biosynthesis; L-histidine from 5-phospho-alpha-D-ribose 1-diphosphate: step 1/9. Required for the first step of histidine biosynthesis. May allow the feedback regulation of ATP phosphoribosyltransferase activity by histidine. In Anaeromyxobacter sp. (strain K), this protein is ATP phosphoribosyltransferase regulatory subunit.